The chain runs to 161 residues: Protein YzcX (161 aa).

The chain is Protein YzcX (yzcX) from Escherichia coli (strain K12).